We begin with the raw amino-acid sequence, 42 residues long: uncharacterized protein (42 aa).

The helical transmembrane segment at proline 15–isoleucine 37 threads the bilayer.

Its subcellular location is the membrane. This is an uncharacterized protein from Dictyostelium discoideum (Social amoeba).